A 320-amino-acid chain; its full sequence is Fe-S cluster assembly protein dre2 (320 aa).

Residues 1-130 (MAKQTLLLSP…KPDIEEMQAV (130 aa)) form an N-terminal SAM-like domain region. The interval 131-213 (PLRLGRKNDH…DNLLDDSELS (83 aa)) is linker. The interval 141 to 166 (LAGAPSLEGSAAEHPFPPEVSEGKTA) is disordered. Residues Cys-222, Cys-233, Cys-236, and Cys-238 each coordinate [2Fe-2S] cluster. The fe-S binding site A stretch occupies residues 222 to 238 (CRPKAGKRRRACKDCTC). [4Fe-4S] cluster is bound by residues Cys-283, Cys-286, Cys-294, and Cys-297. 2 consecutive short sequence motifs (cx2C motif) follow at residues 283–286 (CGNC) and 294–297 (CEGC). Residues 283 to 297 (CGNCSLGDAFRCEGC) are fe-S binding site B.

Belongs to the anamorsin family. In terms of assembly, monomer. Interacts with tah18. Interacts with mia40. [2Fe-2S] cluster serves as cofactor. Requires [4Fe-4S] cluster as cofactor.

The protein localises to the cytoplasm. It localises to the mitochondrion intermembrane space. In terms of biological role, component of the cytosolic iron-sulfur (Fe-S) protein assembly (CIA) machinery required for the maturation of extramitochondrial Fe-S proteins. Part of an electron transfer chain functioning in an early step of cytosolic Fe-S biogenesis, facilitating the de novo assembly of a [4Fe-4S] cluster on the scaffold complex cfd1-nbp35. Electrons are transferred to dre2 from NADPH via the FAD- and FMN-containing protein tah18. Tah18-dre2 are also required for the assembly of the diferric tyrosyl radical cofactor of ribonucleotide reductase (RNR), probably by providing electrons for reduction during radical cofactor maturation in the catalytic small subunit rnr2. In Neosartorya fischeri (strain ATCC 1020 / DSM 3700 / CBS 544.65 / FGSC A1164 / JCM 1740 / NRRL 181 / WB 181) (Aspergillus fischerianus), this protein is Fe-S cluster assembly protein dre2.